The following is a 549-amino-acid chain: CDK5RAP3 protein homolog (549 aa).

3 short sequence motifs (shuffled ATG8-binding motif) span residues 274-277 (IDWD), 285-288 (IDWD), and 333-336 (ISWD).

Belongs to the CDK5RAP3 family. As to quaternary structure, substrate adapter component of the UFM1 ribosome E3 ligase (UREL) complex. Interacts with ATG8 family proteins.

In terms of biological role, substrate adapter of E3 ligase complexes mediating ufmylation, the covalent attachment of the ubiquitin-like modifier UFM1 to substrate proteins, and which is involved in various processes, such as ribosome recycling and reticulophagy (also called ER-phagy). The polypeptide is CDK5RAP3 protein homolog (Arabidopsis thaliana (Mouse-ear cress)).